We begin with the raw amino-acid sequence, 557 residues long: Dihydroxy-acid dehydratase (557 aa).

Residue C47 coordinates [2Fe-2S] cluster. D79 is a binding site for Mg(2+). Residue C120 coordinates [2Fe-2S] cluster. Mg(2+)-binding residues include D121 and K122. K122 is modified (N6-carboxylysine). C192 provides a ligand contact to [2Fe-2S] cluster. Mg(2+) is bound at residue E444. S470 serves as the catalytic Proton acceptor.

Belongs to the IlvD/Edd family. Homodimer. [2Fe-2S] cluster is required as a cofactor. Requires Mg(2+) as cofactor.

The enzyme catalyses (2R)-2,3-dihydroxy-3-methylbutanoate = 3-methyl-2-oxobutanoate + H2O. It catalyses the reaction (2R,3R)-2,3-dihydroxy-3-methylpentanoate = (S)-3-methyl-2-oxopentanoate + H2O. Its pathway is amino-acid biosynthesis; L-isoleucine biosynthesis; L-isoleucine from 2-oxobutanoate: step 3/4. It participates in amino-acid biosynthesis; L-valine biosynthesis; L-valine from pyruvate: step 3/4. Its function is as follows. Functions in the biosynthesis of branched-chain amino acids. Catalyzes the dehydration of (2R,3R)-2,3-dihydroxy-3-methylpentanoate (2,3-dihydroxy-3-methylvalerate) into 2-oxo-3-methylpentanoate (2-oxo-3-methylvalerate) and of (2R)-2,3-dihydroxy-3-methylbutanoate (2,3-dihydroxyisovalerate) into 2-oxo-3-methylbutanoate (2-oxoisovalerate), the penultimate precursor to L-isoleucine and L-valine, respectively. The protein is Dihydroxy-acid dehydratase of Parasynechococcus marenigrum (strain WH8102).